The following is a 158-amino-acid chain: MSRSPRKTPKSPSLQLGQAVEWPATPDAARLDRVPNPQAGTDYLVRFTAPEFTSLCPVTGQPDFAHLVIDYAPGAWLVESKSLKLYLASFRNHGGFHEDCTVSIGKRIAAEIKPKWLRIGGYWYPRGGIPIDVFWQTGKLPKGMWVPDQGVAPYRGRG.

The active-site Thioimide intermediate is C56. Residue D63 is the Proton donor of the active site. Residues 78–80 (VES) and 97–98 (HE) contribute to the substrate site.

Belongs to the GTP cyclohydrolase I family. QueF type 1 subfamily.

Its subcellular location is the cytoplasm. It catalyses the reaction 7-aminomethyl-7-carbaguanine + 2 NADP(+) = 7-cyano-7-deazaguanine + 2 NADPH + 3 H(+). The protein operates within tRNA modification; tRNA-queuosine biosynthesis. Functionally, catalyzes the NADPH-dependent reduction of 7-cyano-7-deazaguanine (preQ0) to 7-aminomethyl-7-deazaguanine (preQ1). This chain is NADPH-dependent 7-cyano-7-deazaguanine reductase, found in Rhodopseudomonas palustris (strain BisB5).